A 1426-amino-acid polypeptide reads, in one-letter code: Protein RhsD (1426 aa).

Residues 256 to 285 are disordered; sequence AEEARTSSLSSSDSSRPLSASAFPDTLPGT. Over residues 262–277 the composition is skewed to low complexity; sequence SSLSSSDSSRPLSASA. The interval 320–1197 is 28 X approximate tandem repeats; the sequence is YTEAGELLAV…LNEENPHHVY (878 aa). 27 repeat units span residues 334–356, 357–378, 379–421, 422–442, 443–464, 465–485, 486–506, 507–529, 530–550, 551–571, 572–592, 593–613, 614–633, 634–654, 655–675, 676–695, 696–715, 716–738, 739–762, 812–832, 833–861, 862–882, 883–905, 906–941, 942–970, 971–995, and 996–1030. The segment covering 1073-1085 has biased composition (basic and acidic residues); it reads ENGEREKAQRRSL. The disordered stretch occupies residues 1073 to 1097; the sequence is ENGEREKAQRRSLAETLQQEGSENG. Repeat unit 28 spans residues 1173 to 1197; it reads GNTAWSAEYDEWGNQLNEENPHHVY.

The protein belongs to the RHS family.

In terms of biological role, rhs elements have a nonessential function. They may play an important role in the natural ecology of the cell. This chain is Protein RhsD (rhsD), found in Escherichia coli (strain K12).